The following is a 180-amino-acid chain: Ribulose bisphosphate carboxylase small subunit, chloroplastic (180 aa).

A chloroplast-targeting transit peptide spans 1 to 56 (MASSVLSSAAVATRSNVAQANMVAPFTGLKSAASFPVSRKQNLDITSIASNGGRVQ).

The protein belongs to the RuBisCO small chain family. Heterohexadecamer of 8 large and 8 small subunits.

Its subcellular location is the plastid. It is found in the chloroplast. Its function is as follows. RuBisCO catalyzes two reactions: the carboxylation of D-ribulose 1,5-bisphosphate, the primary event in carbon dioxide fixation, as well as the oxidative fragmentation of the pentose substrate. Both reactions occur simultaneously and in competition at the same active site. Although the small subunit is not catalytic it is essential for maximal activity. This Nicotiana plumbaginifolia (Leadwort-leaved tobacco) protein is Ribulose bisphosphate carboxylase small subunit, chloroplastic.